The primary structure comprises 431 residues: Mediator of RNA polymerase II transcription subunit 2 (431 aa).

At S6 the chain carries Phosphoserine. The segment covering 105 to 140 (GKEKEKEREEAEKKRAEQENMRKVREQEELKKRQEL) has biased composition (basic and acidic residues). Residues 105–178 (GKEKEKEREE…ANTTDANGSK (74 aa)) are disordered. Over residues 143–152 (ASQQQQLQQN) the composition is skewed to low complexity. Over residues 162 to 178 (NFSTTAPANTTDANGSK) the composition is skewed to polar residues. The residue at position 208 (S208) is a Phosphoserine; by CDK8. The tract at residues 284–399 (NNINSTKNGK…GDNPPPADNG (116 aa)) is disordered. Residues 304–313 (NGDEKNKNNN) show a composition bias toward basic and acidic residues. A compositionally biased stretch (low complexity) spans 318 to 365 (NNNNSSEKNNNNNNNNNNNNDDNGNNNNNNSGNDNNNTTNNDSNNKNN). A compositionally biased stretch (polar residues) spans 366-387 (SITTGNDNENIVNNDLPTTVVS).

Belongs to the mediator complex subunit 2 family. In terms of assembly, component of the Mediator complex, which is composed of at least 21 subunits that form three structurally distinct submodules. The Mediator head module contains MED6, MED8, MED11, SRB4/MED17, SRB5/MED18, ROX3/MED19, SRB2/MED20 and SRB6/MED22, the middle module contains MED1, MED4, NUT1/MED5, MED7, CSE2/MED9, NUT2/MED10, SRB7/MED21 and SOH1/MED31, and the tail module contains MED2, PGD1/MED3, RGR1/MED14, GAL11/MED15 and SIN4/MED16. The head and the middle modules interact directly with RNA polymerase II, whereas the elongated tail module interacts with gene-specific regulatory proteins.

Its subcellular location is the nucleus. Its function is as follows. Component of the Mediator complex, a coactivator involved in the regulated transcription of nearly all RNA polymerase II-dependent genes. Mediator functions as a bridge to convey information from gene-specific regulatory proteins to the basal RNA polymerase II transcription machinery. The Mediator complex, having a compact conformation in its free form, is recruited to promoters by direct interactions with regulatory proteins and serves for the assembly of a functional preinitiation complex with RNA polymerase II and the general transcription factors. The Mediator complex unfolds to an extended conformation and partially surrounds RNA polymerase II, specifically interacting with the unphosphorylated form of the C-terminal domain (CTD) of RNA polymerase II. The Mediator complex dissociates from the RNA polymerase II holoenzyme and stays at the promoter when transcriptional elongation begins. This is Mediator of RNA polymerase II transcription subunit 2 (MED2) from Saccharomyces cerevisiae (strain ATCC 204508 / S288c) (Baker's yeast).